The sequence spans 396 residues: Cystathionine beta-lyase (396 aa).

Lysine 211 carries the N6-(pyridoxal phosphate)lysine modification.

The protein belongs to the trans-sulfuration enzymes family. In terms of assembly, homotetramer. It depends on pyridoxal 5'-phosphate as a cofactor.

It localises to the cytoplasm. The enzyme catalyses L,L-cystathionine + H2O = L-homocysteine + pyruvate + NH4(+). It catalyses the reaction an S-substituted L-cysteine + H2O = a thiol + pyruvate + NH4(+). It participates in amino-acid biosynthesis; L-methionine biosynthesis via de novo pathway; L-homocysteine from L-cystathionine: step 1/1. Its function is as follows. Catalyzes the cleavage of cystathionine to homocysteine, pyruvate and ammonia during methionine biosynthesis. This is Cystathionine beta-lyase (metC) from Haemophilus influenzae (strain ATCC 51907 / DSM 11121 / KW20 / Rd).